The sequence spans 474 residues: Trehalose-6-phosphate synthase (474 aa).

Arginine 10 serves as a coordination point for D-glucose 6-phosphate. A UDP-alpha-D-glucose-binding site is contributed by 22 to 23; sequence GG. Tyrosine 77 and aspartate 131 together coordinate D-glucose 6-phosphate. 2 residues coordinate UDP-alpha-D-glucose: arginine 263 and lysine 268. Residue arginine 301 coordinates D-glucose 6-phosphate. UDP-alpha-D-glucose-binding positions include phenylalanine 340 and 366–370; that span reads LVAKE.

The protein belongs to the glycosyltransferase 20 family. As to quaternary structure, homotetramer.

The catalysed reaction is D-glucose 6-phosphate + UDP-alpha-D-glucose = alpha,alpha-trehalose 6-phosphate + UDP + H(+). It participates in glycan biosynthesis; trehalose biosynthesis. Functionally, probably involved in the osmoprotection via the biosynthesis of trehalose. Catalyzes the transfer of glucose from UDP-alpha-D-glucose (UDP-Glc) to D-glucose 6-phosphate (Glc-6-P) to form trehalose-6-phosphate. Acts with retention of the anomeric configuration of the UDP-sugar donor. The chain is Trehalose-6-phosphate synthase from Escherichia coli O1:K1 / APEC.